Reading from the N-terminus, the 235-residue chain is Homeobox protein Nkx-2.8 (235 aa).

Polar residues predominate over residues 51-67 (SDESGLETSPADSSQLA). The segment at 51 to 86 (SDESGLETSPADSSQLASLRRESPGSDPEKRRKRRV) is disordered. Basic and acidic residues predominate over residues 69–80 (LRRESPGSDPEK). A DNA-binding region (homeobox) is located at residues 81 to 140 (RRKRRVLFSKAQTLELERRFRQQRYLSAPEREQLARLLRLTPTQVKIWFQNHRYKLKRGR).

This sequence belongs to the NK-2 homeobox family. As to expression, prominent expression in ventral brain and neural tube structures.

The protein resides in the nucleus. Its function is as follows. Possible role in the specification of a distinct subset of neurons. The polypeptide is Homeobox protein Nkx-2.8 (Nkx2-8) (Mus musculus (Mouse)).